Reading from the N-terminus, the 61-residue chain is MDIKQLREKSADELKAHLTDLRKEQFSLRMQQVTGQLPKTHETRRVRREIARVKHLLGSTQ.

Belongs to the universal ribosomal protein uL29 family.

The protein is Large ribosomal subunit protein uL29 of Xanthomonas campestris pv. campestris (strain 8004).